The primary structure comprises 441 residues: GTPase Der (441 aa).

2 consecutive EngA-type G domains span residues 4-169 and 178-353; these read PVVA…PEDI and IKVA…DQAA. GTP contacts are provided by residues 10–17, 57–61, 120–123, 184–191, 231–235, and 296–299; these read GRPNVGKS, DTGGI, NKVD, GKPNAGKS, DTAGI, and NKWD. The region spanning 354 to 438 is the KH-like domain; the sequence is FRISTGMLND…PIRFIHRQRE (85 aa).

It belongs to the TRAFAC class TrmE-Era-EngA-EngB-Septin-like GTPase superfamily. EngA (Der) GTPase family. In terms of assembly, associates with the 50S ribosomal subunit.

In terms of biological role, GTPase that plays an essential role in the late steps of ribosome biogenesis. The chain is GTPase Der from Ruminiclostridium cellulolyticum (strain ATCC 35319 / DSM 5812 / JCM 6584 / H10) (Clostridium cellulolyticum).